The chain runs to 156 residues: Small ribosomal subunit protein uS7 (156 aa).

The protein belongs to the universal ribosomal protein uS7 family. As to quaternary structure, part of the 30S ribosomal subunit. Contacts proteins S9 and S11.

One of the primary rRNA binding proteins, it binds directly to 16S rRNA where it nucleates assembly of the head domain of the 30S subunit. Is located at the subunit interface close to the decoding center, probably blocks exit of the E-site tRNA. The polypeptide is Small ribosomal subunit protein uS7 (Shewanella sediminis (strain HAW-EB3)).